Here is a 379-residue protein sequence, read N- to C-terminus: MTASAVLDLVKDLIARPSVTPDDVDCQMLLAQRLERIGFQCETIARGGVTNLWARRGAGAPLTVFAGHTDVVPPGPRDKWDSDPFVPTERDGFLYGRGAADMKSSIAAFVVAAEEFVAAHPEHPGSIALLITSDEEGPAVDGTVIVCDELRQRGEQLDYCIVGEPTSTEALGDVCKNGRRGSLSGRLLVKGVQGHVAYPHLARNPVHQLAPALTELVAIEWDQGNEYFPPTTFQVSNLHAGTGATNVVPGEAVALFNFRFSTASTPGQLKARVHEVLDRHGLEYQLDWELGGEPFLTPRGSLTDALVSAIQAETGLQAELSTTGGTSDGRFIARICPQVIEFGPCNATIHKVNERIELSSLAPLKNIYRRTLENLLLAD.

Residue H68 participates in Zn(2+) binding. D70 is a catalytic residue. Position 101 (D101) interacts with Zn(2+). The Proton acceptor role is filled by E135. Zn(2+) contacts are provided by E136, E164, and H350.

It belongs to the peptidase M20A family. DapE subfamily. As to quaternary structure, homodimer. It depends on Zn(2+) as a cofactor. Co(2+) serves as cofactor.

The enzyme catalyses N-succinyl-(2S,6S)-2,6-diaminopimelate + H2O = (2S,6S)-2,6-diaminopimelate + succinate. The protein operates within amino-acid biosynthesis; L-lysine biosynthesis via DAP pathway; LL-2,6-diaminopimelate from (S)-tetrahydrodipicolinate (succinylase route): step 3/3. In terms of biological role, catalyzes the hydrolysis of N-succinyl-L,L-diaminopimelic acid (SDAP), forming succinate and LL-2,6-diaminopimelate (DAP), an intermediate involved in the bacterial biosynthesis of lysine and meso-diaminopimelic acid, an essential component of bacterial cell walls. In Bordetella bronchiseptica (strain ATCC BAA-588 / NCTC 13252 / RB50) (Alcaligenes bronchisepticus), this protein is Succinyl-diaminopimelate desuccinylase.